Consider the following 353-residue polypeptide: MKTPAILLLLFLFMMSLAQSDEEQSGKEPPEKDDVLVILAEDNSTLLNNNQTMYDPSSEEKESDKPKFNLLETYLPLFIFVLDLPTEDRETLKAYVKDKTYEKLKYVIDSKVKMNRNEKNVLGRINESLVQSIDNLEHFDEITVDVVNGYHNASVYNAIRSVWLKQLRPFLPLIDQMAIQQYFAQRKSSETEKMSIWARLWENLSVWMYGKKKLNECYAMEPKCVRHALELLNFEQRIDLDLAAYENKFDSVDGIIRERLGENRKSSELDEWLHRNRPPKALQAILDERSDIEEEALQRLRDNGVLSSLKHYYKAVIESRSHEEQEDIRHFFDIMNDTFARCFDPLRGQYHDF.

This is an uncharacterized protein from Caenorhabditis elegans.